The primary structure comprises 518 residues: Membrane-bound lytic murein transglycosylase F (518 aa).

Positions 1–21 (MKKLKINYLFIGILALLLAVA) are cleaved as a signal peptide. The segment at 22 to 269 (LWPSIPWFGK…RIEEKYLGHG (248 aa)) is non-LT domain. The tract at residues 270 to 518 (DDFDYVDTRT…SRKGSEEKQN (249 aa)) is LT domain. The active site involves E314.

This sequence in the N-terminal section; belongs to the bacterial solute-binding protein 3 family. The protein in the C-terminal section; belongs to the transglycosylase Slt family.

Its subcellular location is the cell outer membrane. The catalysed reaction is Exolytic cleavage of the (1-&gt;4)-beta-glycosidic linkage between N-acetylmuramic acid (MurNAc) and N-acetylglucosamine (GlcNAc) residues in peptidoglycan, from either the reducing or the non-reducing ends of the peptidoglycan chains, with concomitant formation of a 1,6-anhydrobond in the MurNAc residue.. Functionally, murein-degrading enzyme that degrades murein glycan strands and insoluble, high-molecular weight murein sacculi, with the concomitant formation of a 1,6-anhydromuramoyl product. Lytic transglycosylases (LTs) play an integral role in the metabolism of the peptidoglycan (PG) sacculus. Their lytic action creates space within the PG sacculus to allow for its expansion as well as for the insertion of various structures such as secretion systems and flagella. In Escherichia coli O6:K15:H31 (strain 536 / UPEC), this protein is Membrane-bound lytic murein transglycosylase F.